We begin with the raw amino-acid sequence, 717 residues long: Polyribonucleotide nucleotidyltransferase (717 aa).

Mg(2+)-binding residues include Asp-487 and Asp-493. A KH domain is found at 554 to 613 (PKIITMAINPDKIRDVIGPSGKQINKIIEETGVKIDIEQDGTVFISSINQEMNEKAKKII). The 69-residue stretch at 623-691 (GEIYLGKVKR…KQGRVNLSRK (69 aa)) folds into the S1 motif domain.

It belongs to the polyribonucleotide nucleotidyltransferase family. Requires Mg(2+) as cofactor.

Its subcellular location is the cytoplasm. The enzyme catalyses RNA(n+1) + phosphate = RNA(n) + a ribonucleoside 5'-diphosphate. Functionally, involved in mRNA degradation. Catalyzes the phosphorolysis of single-stranded polyribonucleotides processively in the 3'- to 5'-direction. The sequence is that of Polyribonucleotide nucleotidyltransferase from Bacillus mycoides (strain KBAB4) (Bacillus weihenstephanensis).